A 1016-amino-acid chain; its full sequence is Calmodulin-binding transcription activator 4 (1016 aa).

Positions 38–164 (ISTLYQEAHS…YRDVSEREEG (127 aa)) form a DNA-binding region, CG-1. The tract at residues 324–343 (KNGSGPSGGTGGSGDQGSES) is disordered. The segment covering 328-338 (GPSGGTGGSGD) has biased composition (gly residues). ANK repeat units follow at residues 647 to 676 (QEQG…NVDF), 680 to 709 (KGWS…SAGA), and 719 to 748 (NGKT…TNHL). The disordered stretch occupies residues 753 to 786 (LEETENSKDTAQVQTEKTLNSISEQSPSGNEDQV). A compositionally biased stretch (polar residues) spans 761-785 (DTAQVQTEKTLNSISEQSPSGNEDQ). IQ domains lie at 798–827 (AAQA…LVAC), 855–884 (YNSA…KVVK), and 878–907 (LRQK…AVRI). The segment at 903-925 (WAVRILDKVVLRWRRKGVGLRGF) is calmodulin-binding. A phosphoserine mark is found at Ser935 and Ser962.

The protein belongs to the CAMTA family. In terms of tissue distribution, expressed in roots, stems, leaves, flowers and siliques.

It is found in the nucleus. Transcription activator that binds to the DNA consensus sequence 5'-[ACG]CGCG[GTC]-3'. Regulates transcriptional activity in response to calcium signals. Binds calmodulin in a calcium-dependent manner. Involved together with CAMTA2 and CAMTA3 in the positive regulation of a general stress response. The protein is Calmodulin-binding transcription activator 4 of Arabidopsis thaliana (Mouse-ear cress).